The chain runs to 999 residues: Bifunctional glutamine synthetase adenylyltransferase/adenylyl-removing enzyme (999 aa).

The interval 1-493 is adenylyl removase; the sequence is MFVRKPATER…LHAKLFYQPL (493 aa). The segment at 498–999 is adenylyl transferase; that stretch reads GHTALGIGEG…KAVVRKIFGG (502 aa).

It belongs to the GlnE family. It depends on Mg(2+) as a cofactor.

The enzyme catalyses [glutamine synthetase]-O(4)-(5'-adenylyl)-L-tyrosine + phosphate = [glutamine synthetase]-L-tyrosine + ADP. The catalysed reaction is [glutamine synthetase]-L-tyrosine + ATP = [glutamine synthetase]-O(4)-(5'-adenylyl)-L-tyrosine + diphosphate. Functionally, involved in the regulation of glutamine synthetase GlnA, a key enzyme in the process to assimilate ammonia. When cellular nitrogen levels are high, the C-terminal adenylyl transferase (AT) inactivates GlnA by covalent transfer of an adenylyl group from ATP to specific tyrosine residue of GlnA, thus reducing its activity. Conversely, when nitrogen levels are low, the N-terminal adenylyl removase (AR) activates GlnA by removing the adenylyl group by phosphorolysis, increasing its activity. The regulatory region of GlnE binds the signal transduction protein PII (GlnB) which indicates the nitrogen status of the cell. The chain is Bifunctional glutamine synthetase adenylyltransferase/adenylyl-removing enzyme from Mycolicibacterium smegmatis (strain ATCC 700084 / mc(2)155) (Mycobacterium smegmatis).